The chain runs to 100 residues: Pancreatic trypsin inhibitor (100 aa).

The signal sequence occupies residues 1–21; the sequence is MKMSRLCLSVALLVLLGTLAA. Residues 22–35 constitute a propeptide that is removed on maturation; that stretch reads STPGCDTSNQAKAQ. A BPTI/Kunitz inhibitor domain is found at 40–90; it reads CLEPPYTGPCKARIIRYFYNAKAGLCQTFVYGGCRAKRNNFKSAEDCMRTC. Intrachain disulfides connect cysteine 40–cysteine 90, cysteine 49–cysteine 73, and cysteine 65–cysteine 86. A propeptide spanning residues 94–100 is cleaved from the precursor; the sequence is IGPWENL.

Its subcellular location is the secreted. In terms of biological role, inhibits trypsin, kallikrein, chymotrypsin, and plasmin. This Bos taurus (Bovine) protein is Pancreatic trypsin inhibitor.